The sequence spans 631 residues: DNA ligase (631 aa).

Residues 37–41 and 79–80 each bind NAD(+); these read DAHYD and ST. Lys115 acts as the N6-AMP-lysine intermediate in catalysis. NAD(+) is bound by residues Arg131, Glu160, and Lys272. The Zn(2+) site is built by Cys361, Cys364, Cys377, and Cys382. The BRCT domain maps to 539-630; the sequence is DVSSPISGKG…SQSSPEQMSL (92 aa).

It belongs to the NAD-dependent DNA ligase family. LigA subfamily. The cofactor is Mg(2+). It depends on Mn(2+) as a cofactor.

The catalysed reaction is NAD(+) + (deoxyribonucleotide)n-3'-hydroxyl + 5'-phospho-(deoxyribonucleotide)m = (deoxyribonucleotide)n+m + AMP + beta-nicotinamide D-nucleotide.. In terms of biological role, DNA ligase that catalyzes the formation of phosphodiester linkages between 5'-phosphoryl and 3'-hydroxyl groups in double-stranded DNA using NAD as a coenzyme and as the energy source for the reaction. It is essential for DNA replication and repair of damaged DNA. The sequence is that of DNA ligase from Desulfatibacillum aliphaticivorans.